We begin with the raw amino-acid sequence, 446 residues long: tRNA modification GTPase MnmE (446 aa).

Residues R22, E80, and R119 each coordinate (6S)-5-formyl-5,6,7,8-tetrahydrofolate. Residues 215-370 (GFKVAIIGKP…LILALENIMN (156 aa)) form the TrmE-type G domain. N225 contacts K(+). GTP-binding positions include 225 to 230 (NVGKSS), 244 to 250 (SDIAGTT), and 269 to 272 (DTAG). S229 is a binding site for Mg(2+). Positions 244, 246, and 249 each coordinate K(+). Residue T250 coordinates Mg(2+). K446 contacts (6S)-5-formyl-5,6,7,8-tetrahydrofolate.

Belongs to the TRAFAC class TrmE-Era-EngA-EngB-Septin-like GTPase superfamily. TrmE GTPase family. As to quaternary structure, homodimer. Heterotetramer of two MnmE and two MnmG subunits. The cofactor is K(+).

The protein resides in the cytoplasm. In terms of biological role, exhibits a very high intrinsic GTPase hydrolysis rate. Involved in the addition of a carboxymethylaminomethyl (cmnm) group at the wobble position (U34) of certain tRNAs, forming tRNA-cmnm(5)s(2)U34. The protein is tRNA modification GTPase MnmE of Sulfurimonas denitrificans (strain ATCC 33889 / DSM 1251) (Thiomicrospira denitrificans (strain ATCC 33889 / DSM 1251)).